A 129-amino-acid polypeptide reads, in one-letter code: Small ribosomal subunit protein uS9 (129 aa).

This sequence belongs to the universal ribosomal protein uS9 family.

This is Small ribosomal subunit protein uS9 from Chlorobium phaeovibrioides (strain DSM 265 / 1930) (Prosthecochloris vibrioformis (strain DSM 265)).